The sequence spans 310 residues: MAMFSWTSSEAINGMYIPSALLIFGTAIVKKEWLPYAVALAAILSGGKVFSNRQRKVLNPTEFQNFELKEKTIVSHNVAIYRFALPRPTDILGLPIGQHISLAATIEGQTKEIMRSYTPISSDQEAGYFDLLVKAYPQGNISKHLAGLRIGQTMKVRGPKGAMVYTPNMVKKIGMIAGGTGITPMLQIIKAIIRGRPRNGGNDTTQVDLIFANVNPDDILLKDELDQLAKEDDGFRVFYVLNNPPEGWEGGVGFVTPDMIRAKLPAAAPDTKVLICGPPPMVSAMKKATESLGFKKAGLVSKLEDQVFCF.

The helical transmembrane segment at 32-52 threads the bilayer; the sequence is EWLPYAVALAAILSGGKVFSN. The FAD-binding FR-type domain maps to 61–166; that stretch reads TEFQNFELKE…RGPKGAMVYT (106 aa). FAD contacts are provided by residues 146-161 and 172-209; these read AGLRIGQTMKVRGPKG and KIGMIAGGTGITPMLQIIKAIIRGRPRNGGNDTTQVDL.

This sequence belongs to the flavoprotein pyridine nucleotide cytochrome reductase family. In terms of assembly, monomer. Component of the 2-(3-amino-3-carboxypropyl)histidine synthase complex composed of DPH1, DPH2, DPH3 and a NADH-dependent reductase, predominantly CBR1. FAD is required as a cofactor.

Its subcellular location is the mitochondrion outer membrane. It catalyses the reaction 2 Fe(III)-[cytochrome b5] + NADH = 2 Fe(II)-[cytochrome b5] + NAD(+) + H(+). The catalysed reaction is 2 Fe(3+)-[Dph3] + NADH = 2 Fe(2+)-[Dph3] + NAD(+) + H(+). The protein operates within protein modification; peptidyl-diphthamide biosynthesis. In terms of biological role, NADH-dependent reductase for DPH3 and cytochrome b5. Required for the first step of diphthamide biosynthesis, a post-translational modification of histidine which occurs in elongation factor 2. DPH1 and DPH2 transfer a 3-amino-3-carboxypropyl (ACP) group from S-adenosyl-L-methionine (SAM) to a histidine residue, the reaction is assisted by a reduction system comprising DPH3 and a NADH-dependent reductase, predominantly CBR1. By reducing DPH3, also involved in the formation of the tRNA wobble base modification mcm5s 2U (5-methoxycarbonylmethyl-2-thiouridine), mediated by the elongator complex. The cytochrome b5/NADH cytochrome b5 reductase electron transfer system supports the catalytic activity of several sterol biosynthetic enzymes. The polypeptide is NADH-cytochrome b5 reductase 1 (CBR1) (Ajellomyces capsulatus (strain NAm1 / WU24) (Darling's disease fungus)).